Consider the following 44-residue polypeptide: Unknown protein 9 (44 aa).

This chain is Unknown protein 9, found in Pseudotsuga menziesii (Douglas-fir).